We begin with the raw amino-acid sequence, 782 residues long: Pyridoxal-dependent decarboxylase domain-containing protein 1 (782 aa).

The span at 26-48 (ILEDNQRPSEEEKDGKKYTRKDI) shows a compositional bias: basic and acidic residues. Disordered stretches follow at residues 26-56 (ILEDNQRPSEEEKDGKKYTRKDIPGPLQGSG), 673-695 (QTTGLTPPPTPTSAHGKRQAGQK), 702-721 (RNSDAMSETSSISHLEEVES), and 726-782 (PMPE…DSLR). Composition is skewed to polar residues over residues 703–714 (NSDAMSETSSIS) and 747–782 (AEQSSTPSIVPTETSSEGSQEPSIPSANTAESDSLR).

Belongs to the group II decarboxylase family. Requires pyridoxal 5'-phosphate as cofactor.

The sequence is that of Pyridoxal-dependent decarboxylase domain-containing protein 1 (pdxdc1) from Xenopus laevis (African clawed frog).